A 139-amino-acid polypeptide reads, in one-letter code: 3-hydroxyacyl-[acyl-carrier-protein] dehydratase FabZ (139 aa).

H46 is a catalytic residue.

The protein belongs to the thioester dehydratase family. FabZ subfamily.

The protein localises to the cytoplasm. It carries out the reaction a (3R)-hydroxyacyl-[ACP] = a (2E)-enoyl-[ACP] + H2O. Its function is as follows. Involved in unsaturated fatty acids biosynthesis. Catalyzes the dehydration of short chain beta-hydroxyacyl-ACPs and long chain saturated and unsaturated beta-hydroxyacyl-ACPs. This is 3-hydroxyacyl-[acyl-carrier-protein] dehydratase FabZ from Petrotoga mobilis (strain DSM 10674 / SJ95).